The primary structure comprises 268 residues: Proenkephalin-A (268 aa).

A signal peptide spans 1-24; the sequence is MARFLRLCTWLLVLGSCLLATVQA. 3 disulfide bridges follow: Cys26–Cys48, Cys30–Cys52, and Cys33–Cys65. The disordered stretch occupies residues 162-185; the sequence is GTGDNRAREGRHQESTDNDDNMSK. Residues 166–176 are compositionally biased toward basic and acidic residues; that stretch reads NRAREGRHQES. 2 propeptides span residues 197 to 208 and 218 to 228; these read SPQVEDEAKELQ and VGRPEWWMDYQ. Ser252 is modified (phosphoserine).

The protein belongs to the opioid neuropeptide precursor family. Proenkephalin-A is cleaved by CTSL to generate Met-enkephalin. Post-translationally, processed and degraded by ACE. In terms of processing, probably cleaved by ACE. Processed by ACE to generate Met-enkephalin in the nucleus accumbens of the brain. Post-translationally, the N-terminal domain contains 6 conserved cysteines thought to be involved in disulfide bonding and/or processing.

Its subcellular location is the cytoplasmic vesicle. It is found in the secretory vesicle. The protein resides in the chromaffin granule lumen. The protein localises to the secreted. In terms of biological role, neuropeptide that competes with and mimic the effects of opiate drugs. They play a role in a number of physiologic functions, including pain perception and responses to stress. Met-enkephalin-Arg-Phe neuropeptide acts as a strong ligand of Mu-type opioid receptor OPRM1. Met-enkephalin-Arg-Phe-binding to OPRM1 in the nucleus accumbens of the brain increases activation of OPRM1, leading to long-term synaptic depression of glutamate release. Functionally, increases glutamate release in the striatum and decreases GABA concentration in the striatum. Its function is as follows. Increases glutamate release in the striatum. The protein is Proenkephalin-A (PENK) of Mesocricetus auratus (Golden hamster).